The primary structure comprises 120 residues: UPF0382 membrane protein SSP2132 (120 aa).

Transmembrane regions (helical) follow at residues Val-3 to Ala-23, Met-46 to Val-66, Val-69 to Leu-89, and Ile-94 to Val-114.

The protein belongs to the UPF0382 family.

The protein localises to the cell membrane. The protein is UPF0382 membrane protein SSP2132 of Staphylococcus saprophyticus subsp. saprophyticus (strain ATCC 15305 / DSM 20229 / NCIMB 8711 / NCTC 7292 / S-41).